The following is a 250-amino-acid chain: Probable phosphatase VPA1527 (250 aa).

His-8, His-10, His-16, His-41, Glu-74, His-102, His-132, Asp-194, and His-196 together coordinate Zn(2+).

This sequence belongs to the PHP family. Zn(2+) is required as a cofactor.

This chain is Probable phosphatase VPA1527, found in Vibrio parahaemolyticus serotype O3:K6 (strain RIMD 2210633).